We begin with the raw amino-acid sequence, 297 residues long: Bax inhibitor 1 (297 aa).

Topologically, residues 1–53 (MSGPPPPYEEQSSHLYGQPASSQDGNAFIPEDFKYSTVVISCEPIIRQRFMHK) are lumenal. The chain crosses the membrane as a helical span at residues 54 to 74 (VYSLLSCQLLASLSFCYWASV). Topologically, residues 75–85 (STSLQNFIMSH) are cytoplasmic. Residues 86–106 (IALFYICMVVSLVSCIWLAVS) form a helical membrane-spanning segment. Residues 107-146 (PRPEDYEASVPEPLLTGSSEEPAQEQRRLPWYVLSSYKQK) are Lumenal-facing. A helical transmembrane segment spans residues 147 to 167 (LTLLSIFTLSEAYCLSLVTLA). At 168–171 (YDKD) the chain is on the cytoplasmic side. A helical transmembrane segment spans residues 172-192 (TVLSALLITTIVVVGVSLTAL). Over 193-208 (SERFENVLNSATSIYY) the chain is Lumenal. Residues 209–229 (WLNWGLWIMIGMGLTALLFGW) form a helical membrane-spanning segment. Residues 230-239 (NTHSSKFNLL) are Cytoplasmic-facing. A helical transmembrane segment spans residues 240-260 (YGWLGAILFTAYLFIDTQLIF). At 261–270 (RKVYPDEEVR) the chain is on the lumenal side. The chain crosses the membrane as a helical span at residues 271-291 (CAMMLYLDIVNLFLSILRILA). The Cytoplasmic segment spans residues 292-297 (NSNDDN).

The protein belongs to the BI1 family. LFG subfamily.

The protein resides in the endoplasmic reticulum membrane. It localises to the vacuole membrane. It is found in the mitochondrion membrane. Functionally, links the unfolded protein response and programmed cell death and mediates mitochondrial-dependent apoptosis. Induces cell death and disruption of the mitochondrial transmembrane potential via the mitochondrial phosphate carrier MIR1. Dispensible for starvation-induced autophagy. In Saccharomyces cerevisiae (strain ATCC 204508 / S288c) (Baker's yeast), this protein is Bax inhibitor 1 (BXI1).